The following is a 443-amino-acid chain: Thymidine phosphorylase (443 aa).

Belongs to the thymidine/pyrimidine-nucleoside phosphorylase family. Homodimer.

The catalysed reaction is thymidine + phosphate = 2-deoxy-alpha-D-ribose 1-phosphate + thymine. The protein operates within pyrimidine metabolism; dTMP biosynthesis via salvage pathway; dTMP from thymine: step 1/2. In terms of biological role, the enzymes which catalyze the reversible phosphorolysis of pyrimidine nucleosides are involved in the degradation of these compounds and in their utilization as carbon and energy sources, or in the rescue of pyrimidine bases for nucleotide synthesis. In Shewanella frigidimarina (strain NCIMB 400), this protein is Thymidine phosphorylase.